A 373-amino-acid polypeptide reads, in one-letter code: Spermidine/putrescine import ATP-binding protein PotA (373 aa).

Positions 6–236 (LSLSNLTKQF…PANLFTARFV (231 aa)) constitute an ABC transporter domain. 38–45 (GPSGCGKT) contributes to the ATP binding site.

The protein belongs to the ABC transporter superfamily. Spermidine/putrescine importer (TC 3.A.1.11.1) family. As to quaternary structure, the complex is composed of two ATP-binding proteins (PotA), two transmembrane proteins (PotB and PotC) and a solute-binding protein (PotD).

It is found in the cell inner membrane. It carries out the reaction ATP + H2O + polyamine-[polyamine-binding protein]Side 1 = ADP + phosphate + polyamineSide 2 + [polyamine-binding protein]Side 1.. In terms of biological role, part of the ABC transporter complex PotABCD involved in spermidine/putrescine import. Responsible for energy coupling to the transport system. The protein is Spermidine/putrescine import ATP-binding protein PotA of Marinobacter nauticus (strain ATCC 700491 / DSM 11845 / VT8) (Marinobacter aquaeolei).